The primary structure comprises 483 residues: Dual specificity protein phosphatase CDC14C (483 aa).

The interval 1–45 (MKRKSEGRSSWAAATCSPCCSLTSPSVKKIRSPTQQDPRHRDPQD) is disordered. Positions 1-53 (MKRKSEGRSSWAAATCSPCCSLTSPSVKKIRSPTQQDPRHRDPQDDVYLDITD) match the Nucleolar localization signal motif. Low complexity predominate over residues 12-26 (AAATCSPCCSLTSPS). An a region spans residues 43-197 (PQDDVYLDIT…AMQYGFLNFN (155 aa)). Residues 198 to 211 (SFNLDEYEHYEKAE) are linker. Residues 212–378 (NGDLNWIIPD…EGDYFCQKLK (167 aa)) form a b region. The region spanning 213 to 373 (GDLNWIIPDR…TSLWLEGDYF (161 aa)) is the Tyrosine-protein phosphatase domain. Catalysis depends on Cys-313, which acts as the Phosphocysteine intermediate. Residues 407-426 (QDQQEPEPYSDDDEINGGTQ) form a disordered region. Over residues 408–421 (DQQEPEPYSDDDEI) the composition is skewed to acidic residues. The helical transmembrane segment at 444–466 (ILLTCPLAVLTSALCSVVIWWIV) threads the bilayer.

It belongs to the protein-tyrosine phosphatase family. Non-receptor class CDC14 subfamily.

The protein localises to the membrane. It localises to the nucleus. It is found in the nucleolus. Its subcellular location is the cytoplasm. The protein resides in the cytoskeleton. It catalyses the reaction O-phospho-L-tyrosyl-[protein] + H2O = L-tyrosyl-[protein] + phosphate. It carries out the reaction O-phospho-L-seryl-[protein] + H2O = L-seryl-[protein] + phosphate. The catalysed reaction is O-phospho-L-threonyl-[protein] + H2O = L-threonyl-[protein] + phosphate. Its function is as follows. Dual-specificity phosphatase. Preferentially dephosphorylates proteins modified by proline-directed kinases. In Symphalangus syndactylus (Siamang), this protein is Dual specificity protein phosphatase CDC14C.